A 346-amino-acid chain; its full sequence is UDP-N-acetylenolpyruvoylglucosamine reductase (346 aa).

An FAD-binding PCMH-type domain is found at 17-187; the sequence is IESQAYALIE…VAVGFTLKKE (171 aa). The active site involves Arg-163. Ser-233 (proton donor) is an active-site residue. Residue Glu-329 is part of the active site.

The protein belongs to the MurB family. FAD is required as a cofactor.

It is found in the cytoplasm. The enzyme catalyses UDP-N-acetyl-alpha-D-muramate + NADP(+) = UDP-N-acetyl-3-O-(1-carboxyvinyl)-alpha-D-glucosamine + NADPH + H(+). It functions in the pathway cell wall biogenesis; peptidoglycan biosynthesis. Cell wall formation. In Photobacterium profundum (strain SS9), this protein is UDP-N-acetylenolpyruvoylglucosamine reductase.